The following is a 115-amino-acid chain: Large ribosomal subunit protein uL18 (115 aa).

Belongs to the universal ribosomal protein uL18 family. Part of the 50S ribosomal subunit; part of the 5S rRNA/L5/L18/L25 subcomplex. Contacts the 5S and 23S rRNAs.

In terms of biological role, this is one of the proteins that bind and probably mediate the attachment of the 5S RNA into the large ribosomal subunit, where it forms part of the central protuberance. This chain is Large ribosomal subunit protein uL18, found in Vesicomyosocius okutanii subsp. Calyptogena okutanii (strain HA).